We begin with the raw amino-acid sequence, 130 residues long: Small ribosomal subunit protein uS8 (130 aa).

The protein belongs to the universal ribosomal protein uS8 family. In terms of assembly, part of the 30S ribosomal subunit.

Functionally, one of the primary rRNA binding proteins, it binds directly to 16S rRNA central domain where it helps coordinate assembly of the platform of the 30S subunit. In Methanocella arvoryzae (strain DSM 22066 / NBRC 105507 / MRE50), this protein is Small ribosomal subunit protein uS8.